The following is a 219-amino-acid chain: Ribose-5-phosphate isomerase A (219 aa).

Residues 28–31, 81–84, and 94–97 each bind substrate; these read TGST, DGAD, and KGGG. The active-site Proton acceptor is the E103. K121 lines the substrate pocket.

This sequence belongs to the ribose 5-phosphate isomerase family. In terms of assembly, homodimer.

The enzyme catalyses aldehydo-D-ribose 5-phosphate = D-ribulose 5-phosphate. It participates in carbohydrate degradation; pentose phosphate pathway; D-ribose 5-phosphate from D-ribulose 5-phosphate (non-oxidative stage): step 1/1. Catalyzes the reversible conversion of ribose-5-phosphate to ribulose 5-phosphate. In Shigella boydii serotype 18 (strain CDC 3083-94 / BS512), this protein is Ribose-5-phosphate isomerase A.